The primary structure comprises 140 residues: Ribonuclease P protein component (140 aa).

The protein belongs to the RnpA family. In terms of assembly, consists of a catalytic RNA component (M1 or rnpB) and a protein subunit.

It carries out the reaction Endonucleolytic cleavage of RNA, removing 5'-extranucleotides from tRNA precursor.. RNaseP catalyzes the removal of the 5'-leader sequence from pre-tRNA to produce the mature 5'-terminus. It can also cleave other RNA substrates such as 4.5S RNA. The protein component plays an auxiliary but essential role in vivo by binding to the 5'-leader sequence and broadening the substrate specificity of the ribozyme. The protein is Ribonuclease P protein component of Nostoc sp. (strain PCC 7120 / SAG 25.82 / UTEX 2576).